Reading from the N-terminus, the 507-residue chain is ATP synthase subunit alpha, chloroplastic (507 aa).

170–177 (GDRQTGKT) contacts ATP. T257 is subject to Phosphothreonine.

It belongs to the ATPase alpha/beta chains family. F-type ATPases have 2 components, CF(1) - the catalytic core - and CF(0) - the membrane proton channel. CF(1) has five subunits: alpha(3), beta(3), gamma(1), delta(1), epsilon(1). CF(0) has four main subunits: a, b, b' and c.

The protein localises to the plastid. The protein resides in the chloroplast thylakoid membrane. The catalysed reaction is ATP + H2O + 4 H(+)(in) = ADP + phosphate + 5 H(+)(out). In terms of biological role, produces ATP from ADP in the presence of a proton gradient across the membrane. The alpha chain is a regulatory subunit. The protein is ATP synthase subunit alpha, chloroplastic of Aethionema cordifolium (Lebanon stonecress).